Consider the following 388-residue polypeptide: Succinate--CoA ligase [ADP-forming] subunit beta (388 aa).

Residues 9-244 (KQLFARYGLP…QSQEDPRAAQ (236 aa)) enclose the ATP-grasp domain. Residues Lys-46, 53-55 (GRG), Glu-99, Thr-102, and Glu-107 contribute to the ATP site. Asn-199 and Asp-213 together coordinate Mg(2+). Residues Asn-264 and 321 to 323 (GIV) each bind substrate.

This sequence belongs to the succinate/malate CoA ligase beta subunit family. In terms of assembly, heterotetramer of two alpha and two beta subunits. It depends on Mg(2+) as a cofactor.

The catalysed reaction is succinate + ATP + CoA = succinyl-CoA + ADP + phosphate. It catalyses the reaction GTP + succinate + CoA = succinyl-CoA + GDP + phosphate. Its pathway is carbohydrate metabolism; tricarboxylic acid cycle; succinate from succinyl-CoA (ligase route): step 1/1. In terms of biological role, succinyl-CoA synthetase functions in the citric acid cycle (TCA), coupling the hydrolysis of succinyl-CoA to the synthesis of either ATP or GTP and thus represents the only step of substrate-level phosphorylation in the TCA. The beta subunit provides nucleotide specificity of the enzyme and binds the substrate succinate, while the binding sites for coenzyme A and phosphate are found in the alpha subunit. This Shigella flexneri serotype 5b (strain 8401) protein is Succinate--CoA ligase [ADP-forming] subunit beta.